A 603-amino-acid chain; its full sequence is UPF0313 protein MJ1155 (603 aa).

The region spanning 285–557 is the Radical SAM core domain; sequence GIVPVQFSVV…KIQKAICLYR (273 aa). [4Fe-4S] cluster is bound by residues Cys-299, Cys-303, and Cys-306.

The protein belongs to the UPF0313 family. It depends on [4Fe-4S] cluster as a cofactor.

The polypeptide is UPF0313 protein MJ1155 (Methanocaldococcus jannaschii (strain ATCC 43067 / DSM 2661 / JAL-1 / JCM 10045 / NBRC 100440) (Methanococcus jannaschii)).